Reading from the N-terminus, the 46-residue chain is Spectrin alpha chain, non-erythrocytic 1 (46 aa).

6 Spectrin repeats span residues 1-5 (AQLAD), 7-14 (FHLQQFFR), 15-20 (SQLLGS), 21-26 (AHEVQR), 27-35 (LAQFVEHWK), and 39-46 (DLFLTFAK).

The protein belongs to the spectrin family. Associates with the gamma-tubulin complex in brain, but not in kidney, liver, sperm, or uterus. Like erythrocyte spectrin, the spectrin-like proteins are capable of forming dimers which can further associate to tetramers. Interacts with isoform 1 of ACP1. Interacts with CALM and EMD. Interacts (via C-terminal spectrin repeats) with TRPC4. Identified in a complex with ACTN4, CASK, IQGAP1, MAGI2, NPHS1 and SPTBN1. Interacts with CLN3; this interaction regulates the fodrin localization at the plasma membrane.

Its subcellular location is the cytoplasm. The protein resides in the cytoskeleton. It is found in the cell cortex. Fodrin, which seems to be involved in secretion, interacts with calmodulin in a calcium-dependent manner and is thus candidate for the calcium-dependent movement of the cytoskeleton at the membrane. The sequence is that of Spectrin alpha chain, non-erythrocytic 1 (SPTAN1) from Capra hircus (Goat).